We begin with the raw amino-acid sequence, 843 residues long: F-box only protein 11 (843 aa).

The tract at residues 1 to 63 (MVAEESGPGA…RVSGKSQDLS (63 aa)) is disordered. A compositionally biased stretch (polar residues) spans 30–45 (PTKNSMEGASTSTTEN). One can recognise an F-box domain in the interval 69 to 115 (QYLQEKLPDEVVLKIFSYLLEQDLCRAACVCKRFSELANDPILWKRL). PbH1 repeat units follow at residues 311-333 (GACP…YITD), 334-356 (HAQG…WVKN), 357-379 (HGNP…FTFD), 380-402 (HGMG…EVKA), 403-425 (YANP…YVHE), 426-448 (KGRG…WITS), 449-471 (NSDP…YIFG), 472-494 (DGRG…QIRT), 495-517 (NSCP…YVHE), 518-540 (KGQG…WVTT), 541-563 (GSTP…YFYD), 564-586 (NGHG…QIRT), 587-609 (GSNP…LVYN), 610-632 (SGLG…WIKT), 633-655 (DSNP…CIFN), 656-678 (GGRG…LIST), 679-701 (NSHP…EITN), 702-724 (HATA…FLAS), and 725-746 (GVNV…EKAV). The UBR-type zinc-finger motif lies at 749–820 (GQCLYKISSY…LSNPCTLAGE (72 aa)).

Component of the SCF(FBXO11) complex consisting of CUL1, RBX1, SKP1 and FBXO11. Interacts with CIITA.

It is found in the nucleus. It localises to the chromosome. The protein operates within protein modification; protein ubiquitination. In terms of biological role, substrate recognition component of a SCF (SKP1-CUL1-F-box protein) E3 ubiquitin-protein ligase complex which mediates the ubiquitination and subsequent proteasomal degradation of target proteins, such as DTL/CDT2, BCL6, SNAI1 and PRDM1/BLIMP1. The SCF(FBXO11) complex mediates ubiquitination and degradation of BCL6, thereby playing a role in the germinal center B-cells terminal differentiation toward memory B-cells and plasma cells. The SCF(FBXO11) complex also mediates ubiquitination and degradation of DTL, an important step for the regulation of TGF-beta signaling, cell migration and the timing of the cell-cycle progression and exit. The SCF(FBXO11) complex also catalyzes ubiquitination and degradation of GSK3B-phosphorylated SNAI1. Binds to and neddylates phosphorylated p53/TP53, inhibiting its transcriptional activity. Plays a role in the regulatiom of erythropoiesis but not myelopoiesis or megakaryopoiesis. Mechanistically, activates erythroid genes by mediating the degradation of BAHD1, a heterochromatin-associated protein that recruits corepressors to H3K27me3 marks. Participates in macrophage cell death and inflammation in response to bacterial toxins by regulating the expression of complement 5a receptor 1/C5AR1 and IL-1beta. Acts as a critical regulator to determine the level of MHC-II by mediating the recognition of degron at the P/S/T domain of CIITA leading to its ubiquitination and subsequent degradation via the proteasome. Participates in the antiviral repsonse by initiating the activation of TBK1-IRF3-IFN-I axis. Mediates the 'Lys-63'-linked ubiquitination of TRAF3 to strengthen the interaction between TRAF3 and TBK1. In Rattus norvegicus (Rat), this protein is F-box only protein 11 (Fbxo11).